Consider the following 812-residue polypeptide: MTEKSHKKTAKGRAGSPSPTSARNKKADNGARGNKVSERLKAVKELQKTETKKARPEHVVNLIGDALWLMGLAATLYLAISLISFDMGDPSWSHSSPVVEDVANWGGLFGAYVADVGYYLFGWSFWWWIAAACVVLYKNFRLHAKQTENEAYNHKIAAAALFVLTVFSPVLEYFVLGGKYADSLPVGAGGMVGIRVGAVFAWLLGKSGSLLIILVVLLLSLSLLVQISWLEFLNGAGRAVQNRLSALSGKVMALGKRRPNTKTDGVDTQNTRRMVKEAKNITAKPVALPEGSSSNRKSVAVSVAPPPKIQVSLFEDDEPRQAGEYHKPTLNLLRIPDSEPVSINPAELERTAELIESKLAEFGIGVQVVSATSGPVITRYEIEPAQGVKGSQIVALSKDLARSMSLQSVRIVETIAGKNTMGIELPNDKRQDVMLSEILSSPVFAEAKSKLTVALGKDIAGTPVVGDLAKMPHLLVAGMTGSGKSVGVNGMIMSMLFKATPDEVRFIMIDPKMLELSIYDGIPHLLCPVVTDMREAGQALNWCVAEMEKRYRLLSHAGVRNLEGFNQKVEAAKAAGKPLLNPFSLNPDEPEPLEKLPLIVVVIDELADLMMTERKAVEQQIARLAQKARAAGIHMIVATQRPSVDVVTGLIKANIPTRMAFTVQSKIDSRTILDQMGADELLKYGDSLFLQPGSAEPTRLQGAFVSDDEVHQVVNYVKSQAPADYIEGLLSGEAALETANIVNPNADSDELFDQAVAYVLESKKTSISSLQRQLRIGYNRAANLMEALENAGVVSSTDLNGSRKILAHKDHL.

Over residues 1–11 the composition is skewed to basic residues; the sequence is MTEKSHKKTAK. The segment at 1–36 is disordered; that stretch reads MTEKSHKKTAKGRAGSPSPTSARNKKADNGARGNKV. Positions 25–36 are enriched in basic and acidic residues; that stretch reads KKADNGARGNKV. 5 consecutive transmembrane segments (helical) span residues 63-83, 116-136, 156-176, 184-204, and 210-230; these read IGDA…ISLI, VGYY…CVVL, IAAA…YFVL, LPVG…AWLL, and LLII…ISWL. At 231 to 812 the chain is on the cytoplasmic side; it reads EFLNGAGRAV…RKILAHKDHL (582 aa). In terms of domain architecture, FtsK spans 461 to 670; it reads GTPVVGDLAK…FTVQSKIDSR (210 aa). Residue 481–486 coordinates ATP; the sequence is GSGKSV.

The protein belongs to the FtsK/SpoIIIE/SftA family. Homohexamer. Forms a ring that surrounds DNA.

The protein localises to the cell inner membrane. Essential cell division protein that coordinates cell division and chromosome segregation. The N-terminus is involved in assembly of the cell-division machinery. The C-terminus functions as a DNA motor that moves dsDNA in an ATP-dependent manner towards the dif recombination site, which is located within the replication terminus region. Translocation stops specifically at Xer-dif sites, where FtsK interacts with the Xer recombinase, allowing activation of chromosome unlinking by recombination. FtsK orienting polar sequences (KOPS) guide the direction of DNA translocation. FtsK can remove proteins from DNA as it translocates, but translocation stops specifically at XerCD-dif site, thereby preventing removal of XerC and XerD from dif. In Neisseria meningitidis serogroup B (strain ATCC BAA-335 / MC58), this protein is DNA translocase FtsK 1 (ftsK1).